A 248-amino-acid polypeptide reads, in one-letter code: UDP-2,3-diacylglucosamine hydrolase (248 aa).

Mn(2+) contacts are provided by Asp-7, His-9, Asp-40, Asn-78, and His-113. 78–79 (NR) provides a ligand contact to substrate. Residues Asp-121, Ser-159, Thr-163, Lys-166, and His-194 each coordinate substrate. Mn(2+) is bound by residues His-194 and His-196.

Belongs to the LpxH family. The cofactor is Mn(2+).

The protein localises to the cell inner membrane. The enzyme catalyses UDP-2-N,3-O-bis[(3R)-3-hydroxytetradecanoyl]-alpha-D-glucosamine + H2O = 2-N,3-O-bis[(3R)-3-hydroxytetradecanoyl]-alpha-D-glucosaminyl 1-phosphate + UMP + 2 H(+). Its pathway is glycolipid biosynthesis; lipid IV(A) biosynthesis; lipid IV(A) from (3R)-3-hydroxytetradecanoyl-[acyl-carrier-protein] and UDP-N-acetyl-alpha-D-glucosamine: step 4/6. In terms of biological role, hydrolyzes the pyrophosphate bond of UDP-2,3-diacylglucosamine to yield 2,3-diacylglucosamine 1-phosphate (lipid X) and UMP by catalyzing the attack of water at the alpha-P atom. Involved in the biosynthesis of lipid A, a phosphorylated glycolipid that anchors the lipopolysaccharide to the outer membrane of the cell. The polypeptide is UDP-2,3-diacylglucosamine hydrolase (Pseudomonas savastanoi pv. phaseolicola (strain 1448A / Race 6) (Pseudomonas syringae pv. phaseolicola (strain 1448A / Race 6))).